The sequence spans 304 residues: Coenzyme PQQ synthesis protein B (304 aa).

This sequence belongs to the PqqB family.

Its pathway is cofactor biosynthesis; pyrroloquinoline quinone biosynthesis. Functionally, may be involved in the transport of PQQ or its precursor to the periplasm. The polypeptide is Coenzyme PQQ synthesis protein B (Pseudomonas aeruginosa (strain LESB58)).